The sequence spans 396 residues: Elongation factor Tu (396 aa).

In terms of domain architecture, tr-type G spans Lys10–Val205. Positions Gly19–Thr26 are G1. Residue Gly19–Thr26 participates in GTP binding. Thr26 lines the Mg(2+) pocket. Positions Gly62–Asn66 are G2. The interval Asp83–Gly86 is G3. Residues Asp83–His87 and Asn138–Asp141 contribute to the GTP site. The tract at residues Asn138–Asp141 is G4. The interval Ser175–Leu177 is G5.

It belongs to the TRAFAC class translation factor GTPase superfamily. Classic translation factor GTPase family. EF-Tu/EF-1A subfamily. Monomer.

The protein localises to the cytoplasm. It carries out the reaction GTP + H2O = GDP + phosphate + H(+). Its function is as follows. GTP hydrolase that promotes the GTP-dependent binding of aminoacyl-tRNA to the A-site of ribosomes during protein biosynthesis. In Rhodococcus jostii (strain RHA1), this protein is Elongation factor Tu.